Consider the following 406-residue polypeptide: MAKVHKDVKKIVLAYSGGLDTSIILKWLKNEYGCEVIAFSADLGQGDELAPIRDKAFATGADKVYIDDLKEEFVRDFVFPMFRANAIYEGHYLLGTSIARPLIAKRQMEIAKIEGADAVSHGATGKGNDQVRFELAYYHFDPAITVVVPWREWKLNSRQALVNYAKKNGIPIPVTKKRPWSSDRNMLHISFEGGILEDTWAEPPENMYVLTKAPEKAPNKPQFVEIEFKNGNAVAVDGEKMSPAQLLAHLNYIGGEHGIGRVDLLENRSVGMKSRGVYETPGGTILREAHSAVEQITMDREVMRIRDSLIPEYARQVYSGYWFSPEREMLQTLIDDSQKCVNGVARVKLYKGHCRTVGRKSETNSLFNLDFATFEKDQVFNQADATGFIKINSLRLRIRALMQGKK.

ATP-binding positions include 14–22 (AYSGGLDTS) and Ala-41. Tyr-92 and Ser-97 together coordinate L-citrulline. Gly-122 lines the ATP pocket. 3 residues coordinate L-aspartate: Thr-124, Asn-128, and Asp-129. Asn-128 lines the L-citrulline pocket. L-citrulline contacts are provided by Arg-132, Ser-181, Ser-190, Glu-266, and Tyr-278.

Belongs to the argininosuccinate synthase family. Type 1 subfamily. As to quaternary structure, homotetramer.

The protein localises to the cytoplasm. It carries out the reaction L-citrulline + L-aspartate + ATP = 2-(N(omega)-L-arginino)succinate + AMP + diphosphate + H(+). It participates in amino-acid biosynthesis; L-arginine biosynthesis; L-arginine from L-ornithine and carbamoyl phosphate: step 2/3. This Geobacter metallireducens (strain ATCC 53774 / DSM 7210 / GS-15) protein is Argininosuccinate synthase.